Consider the following 149-residue polypeptide: Large ribosomal subunit protein uL13 (149 aa).

Belongs to the universal ribosomal protein uL13 family. Part of the 50S ribosomal subunit.

Its function is as follows. This protein is one of the early assembly proteins of the 50S ribosomal subunit, although it is not seen to bind rRNA by itself. It is important during the early stages of 50S assembly. This chain is Large ribosomal subunit protein uL13, found in Saccharolobus solfataricus (strain ATCC 35092 / DSM 1617 / JCM 11322 / P2) (Sulfolobus solfataricus).